Here is a 640-residue protein sequence, read N- to C-terminus: EF-hand domain-containing protein 1 (640 aa).

A required for its localization in the mitotic spindle and interaction with alpha-tubulin region spans residues 1–45 (MVSNPVHGLPFLPGTSFKDSTKTAFHRSQTLSYRNGYAIVRRPTV). 3 DM10 domains span residues 93 to 198 (DKKV…ESQG), 239 to 359 (DKQV…KEKF), and 416 to 520 (DNKV…ESNA). The segment at 535–554 (VRKREAPAPEAESKQTEKDP) is disordered. The segment covering 538-554 (REAPAPEAESKQTEKDP) has biased composition (basic and acidic residues). Residues 574–609 (SCKDNIREAFQIYDKEASGYVDRDMFFKICESLNVP) enclose the EF-hand domain.

As to quaternary structure, microtubule inner protein component of sperm flagellar doublet microtubules. Interacts with the C-terminus of CACNA1E. Interacts with alpha-tubulin. As to expression, widely expressed. Not detected in lymphocytes.

The protein resides in the cytoplasm. The protein localises to the cytoskeleton. It is found in the cilium axoneme. Its subcellular location is the flagellum axoneme. It localises to the microtubule organizing center. The protein resides in the centrosome. The protein localises to the spindle. It is found in the spindle pole. Functionally, microtubule inner protein (MIP) part of the dynein-decorated doublet microtubules (DMTs) in cilia axoneme, which is required for motile cilia beating. Microtubule-associated protein which regulates cell division and neuronal migration during cortical development. Necessary for radial and tangential cell migration during brain development, possibly acting as a regulator of cell morphology and process formation during migration. May enhance calcium influx through CACNA1E and stimulate programmed cell death. In Homo sapiens (Human), this protein is EF-hand domain-containing protein 1.